The primary structure comprises 180 residues: FMN reductase (NADH) RutF (180 aa).

It belongs to the non-flavoprotein flavin reductase family. RutF subfamily.

It catalyses the reaction FMNH2 + NAD(+) = FMN + NADH + 2 H(+). Catalyzes the reduction of FMN to FMNH2 which is used to reduce pyrimidine by RutA via the Rut pathway. The chain is FMN reductase (NADH) RutF from Variovorax paradoxus (strain S110).